Reading from the N-terminus, the 316-residue chain is Transcription initiation factor IIB (316 aa).

Residues 11–42 (PKVTCPNHPDALLVEDYRAGDMICSECGLVVG) form a TFIIB-type zinc finger. Residues Cys-15, His-18, Cys-34, and Cys-37 each coordinate Zn(2+). 2 consecutive repeat copies span residues 124 to 200 (MSDR…LILK) and 218 to 294 (FCSN…LIYP).

Belongs to the TFIIB family.

The protein resides in the nucleus. The protein localises to the chromosome. It catalyses the reaction L-lysyl-[protein] + acetyl-CoA = N(6)-acetyl-L-lysyl-[protein] + CoA + H(+). In terms of biological role, general transcription factor that plays a role in transcription initiation by RNA polymerase II (Pol II). Involved in the pre-initiation complex (PIC) formation and Pol II recruitment at promoter DNA. Together with the TATA box-bound TBP forms the core initiation complex and provides a bridge between TBP and the Pol II-TFIIF complex. Released from the PIC early following the onset of transcription during the initiation and elongation transition and reassociates with TBP during the next transcription cycle. Associates with chromatin to core promoter-specific regions. Binds to two distinct DNA core promoter consensus sequence elements in a TBP-independent manner; these IIB-recognition elements (BREs) are localized immediately upstream (BREu), 5'-[GC][GC][GA]CGCC-3', and downstream (BREd), 5'-[GA]T[TGA][TG][GT][TG][TG]-3', of the TATA box element. Modulates transcription start site selection. Also exhibits autoacetyltransferase activity that contributes to the activated transcription. The protein is Transcription initiation factor IIB of Xenopus laevis (African clawed frog).